Consider the following 382-residue polypeptide: Myb-like transcription factor (382 aa).

Myb-like domains follow at residues 1 to 57 (MPRS…RWSK), 58 to 108 (ITGA…QHCL), and 109 to 160 (DPSL…ITLF). Residues 194–210 (MSMDASEDGDDAEDDQT) show a composition bias toward acidic residues. The segment at 194-240 (MSMDASEDGDDAEDDQTPDSYTSISTSSFDDILGGSSSSPSAADTMT) is disordered. Over residues 211–240 (PDSYTSISTSSFDDILGGSSSSPSAADTMT) the composition is skewed to polar residues.

It localises to the nucleus. Functionally, transcription factor; part of the gene cluster that mediates the biosynthesis of 1233A, a natural compound known as an inhibitor of HMG-CoA synthase in the mevalonate pathway and with antibacterial and antifungal activities. Involved in hygromycin B-induced transcriptional control of the cluster. The sequence is that of Myb-like transcription factor from Fusarium sp.